A 293-amino-acid chain; its full sequence is Pre-mRNA-splicing factor cwf21 (293 aa).

Disordered regions lie at residues 30 to 52, 80 to 119, and 146 to 293; these read YDKN…VQDP, SQHS…TKSL, and EKGK…GEIV. Residues 43–52 are compositionally biased toward basic and acidic residues; the sequence is KALEKRVQDP. The CWF21 domain occupies 55–98; sequence SEHECRRQIESKLLLYREQLLEEVSSQHSTDAAASDSNTNFGTE. The span at 80 to 97 shows a compositional bias: polar residues; sequence SQHSTDAAASDSNTNFGT. 4 stretches are compositionally biased toward basic and acidic residues: residues 106–119, 159–186, 195–214, and 227–259; these read IIKD…TKSL, KRKE…RSSV, RYSE…YNEN, and ELER…ERYS. S118 is modified (phosphoserine). Residues S285 and S286 each carry the phosphoserine modification.

This sequence belongs to the CWC21 family. As to quaternary structure, belongs to the 40S cdc5-associated complex (or cwf complex), a spliceosome sub-complex reminiscent of a late-stage spliceosome composed of the U2, U5 and U6 snRNAs and at least brr2, cdc5, cwf2/prp3, cwf3/syf1, cwf4/syf3, cwf5/ecm2, spp42/cwf6, cwf7/spf27, cwf8, cwf9, cwf10, cwf11, cwf12, prp45/cwf13, cwf14, cwf15, cwf16, cwf17, cwf18, cwf19, cwf20, cwf21, cwf22, cwf23, cwf24, cwf25, cwf26, cyp7/cwf27, cwf28, cwf29/ist3, lea1, msl1, prp5/cwf1, prp10, prp12/sap130, prp17, prp22, sap61, sap62, sap114, sap145, slu7, smb1, smd1, smd3, smf1, smg1 and syf2.

The protein localises to the cytoplasm. Its subcellular location is the nucleus. Its function is as follows. Involved in pre-mRNA splicing. May function at or prior to the first catalytic step of splicing at the catalytic center of the spliceosome. May do so by stabilizing the catalytic center or the position of the RNA substrate. The polypeptide is Pre-mRNA-splicing factor cwf21 (cwf21) (Schizosaccharomyces pombe (strain 972 / ATCC 24843) (Fission yeast)).